The chain runs to 584 residues: Outer membrane transporter CdiB-2 (584 aa).

An N-terminal signal peptide occupies residues 1–20; sequence MATRFAILPVTALITLTAQA. A compositionally biased stretch (low complexity) spans 24 to 44; sequence PTPNDQAAAARANAEQNQQAQ. The interval 24-72 is disordered; it reads PTPNDQAAAARANAEQNQQAQQRRDAQQRDATVQAPGVRSDVPRPEAYP. One can recognise a POTRA domain in the interval 98 to 171; it reads SKAQGASALP…GALKLALIPG (74 aa).

This sequence belongs to the TPS (TC 1.B.20) family.

Its subcellular location is the cell outer membrane. In terms of biological role, potential outer membrane protein component of a toxin-immunity protein module, which functions as a cellular contact-dependent growth inhibition (CDI) system. CDI modules allow bacteria to communicate with and inhibit the growth of closely related neighboring bacteria in a contact-dependent fashion. This protein may be required for secretion and assembly of the CdiA toxin protein. Functionally, expression of this cdiAIB locus in B.thailandensis confers protection against other bacteria carrying the locus; growth inhibition requires cellular contact. Its function is as follows. Probable member of a two partner secretion pathway (TPS) in which it mediates the secretion of CdiA2. The sequence is that of Outer membrane transporter CdiB-2 (cdiB2) from Burkholderia pseudomallei (strain 1026b).